Reading from the N-terminus, the 406-residue chain is chitinase-like effector (406 aa).

Positions 1 to 23 (MLTLLPSLILLLSTLSLSTPANA) are cleaved as a signal peptide. The GH18 domain occupies 26-405 (AIAKAYYPGW…DAVRHGAGFK (380 aa)). Y138 and W384 together coordinate chitin.

It belongs to the glycosyl hydrolase 18 family.

The protein resides in the secreted. In terms of biological role, catalytically impaired chitinase that binds efficiently to chitin, but not to chitosan, xylan, or cellulose. Despite the lack of chitinolytic activity, retains substrate binding specificity and acts as an effector to prevent chitin-triggered immunity by sequestering immunogenic chitin fragments. This is chitinase-like effector (Chi) from Moniliophthora roreri (Frosty pod rot fungus).